Reading from the N-terminus, the 156-residue chain is Lipoprotein signal peptidase (156 aa).

Helical transmembrane passes span 37 to 57 (VIPG…FGFL), 68 to 88 (FFVV…KSAE), and 95 to 115 (ILGL…RILY). Catalysis depends on residues Asp120 and Asp138. Residues 133–153 (AFNVADIAICLGAFAMIVSFY) form a helical membrane-spanning segment.

It belongs to the peptidase A8 family.

Its subcellular location is the cell inner membrane. It catalyses the reaction Release of signal peptides from bacterial membrane prolipoproteins. Hydrolyzes -Xaa-Yaa-Zaa-|-(S,diacylglyceryl)Cys-, in which Xaa is hydrophobic (preferably Leu), and Yaa (Ala or Ser) and Zaa (Gly or Ala) have small, neutral side chains.. The protein operates within protein modification; lipoprotein biosynthesis (signal peptide cleavage). In terms of biological role, this protein specifically catalyzes the removal of signal peptides from prolipoproteins. In Maridesulfovibrio salexigens (strain ATCC 14822 / DSM 2638 / NCIMB 8403 / VKM B-1763) (Desulfovibrio salexigens), this protein is Lipoprotein signal peptidase.